A 527-amino-acid chain; its full sequence is tRNA-2-methylthio-N(6)-dimethylallyladenosine synthase (527 aa).

The interval 1 to 27 is disordered; that stretch reads MMNEKQRLQYTAQIETDHPTDKKSALD. A compositionally biased stretch (basic and acidic residues) spans 15–27; that stretch reads ETDHPTDKKSALD. An MTTase N-terminal domain is found at 84–202; sequence RKFYIRTYGC…LPYILKEAYM (119 aa). Residues Cys93, Cys129, Cys163, Cys239, Cys243, and Cys246 each contribute to the [4Fe-4S] cluster site. A Radical SAM core domain is found at 225–455; the sequence is RKGNIKAWVN…NALVNEISAK (231 aa). Residues 458–521 enclose the TRAM domain; that stretch reads KEYEGQVVEV…TWTLNGEMVE (64 aa).

It belongs to the methylthiotransferase family. MiaB subfamily. In terms of assembly, monomer. [4Fe-4S] cluster is required as a cofactor.

Its subcellular location is the cytoplasm. The enzyme catalyses N(6)-dimethylallyladenosine(37) in tRNA + (sulfur carrier)-SH + AH2 + 2 S-adenosyl-L-methionine = 2-methylsulfanyl-N(6)-dimethylallyladenosine(37) in tRNA + (sulfur carrier)-H + 5'-deoxyadenosine + L-methionine + A + S-adenosyl-L-homocysteine + 2 H(+). Its function is as follows. Catalyzes the methylthiolation of N6-(dimethylallyl)adenosine (i(6)A), leading to the formation of 2-methylthio-N6-(dimethylallyl)adenosine (ms(2)i(6)A) at position 37 in tRNAs that read codons beginning with uridine. The polypeptide is tRNA-2-methylthio-N(6)-dimethylallyladenosine synthase (Anoxybacillus flavithermus (strain DSM 21510 / WK1)).